Here is a 490-residue protein sequence, read N- to C-terminus: MLMTAEQYIESLRKLNTRVYMFGEKIENWVDHPMIRPSINCVAMTYELAQDPQYADLMTTKSNLIGKTINRFANLHQSTDDLRKKVKMQRLLGQKTASCFQRCVGMDAFNAVFSTTYEIDQKYGTNYHKNFTEYLKYIQENDLIVDGAMTDPKGDRGLAPSAQKDPDLFLRIVEKREDGIVVRGAKAHQTGSINSHEHIIMPTIAMTEADKDYAVSFACPSDADGLFMIYGRQSCDTRKMEEGADIDLGNKQFGGQEALVVFDNVFIPNDRIFLCQEYDFAGMMVERFAGYHRQSYGGCKVGVGDVVIGAAALAADYNGAQKASHVKDKLIEMTHLNETLYCCGIACSAEGYPTAAGNYQIDLLLANVCKQNITRFPYEIVRLAEDIAGGLMVTMPSEADFKSETVVGRDGETIGDFCNKFFAAAPTCTTEERMRVLRFLENICLGASAVGYRTESMHGAGSPQAQRIMIARQGNINAKKELAKAIAGIK.

[4Fe-4S] cluster is bound by residues Cys99 and Cys103. FAD-binding positions include 149–156 and 188–190; these read MTDPKGDR and HQT. Residues His292 and Cys299 each contribute to the [4Fe-4S] cluster site. Residues His325 and 386-390 contribute to the FAD site; that span reads DIAGG.

In terms of assembly, homotetramer. The cofactor is FAD. Requires [4Fe-4S] cluster as cofactor.

It carries out the reaction 4-hydroxybutanoyl-CoA = (2E)-butenoyl-CoA + H2O. It catalyses the reaction vinylacetyl-CoA = (2E)-butenoyl-CoA. Its function is as follows. Catalyzes the reversible conversion of 4-hydroxybutyryl-CoA to crotonyl-CoA. The mechanism of the reaction seems to go through three steps: (1) the FAD-dependent oxidation of 4-hydroxybutyryl-CoA to 4-hydroxycrotonyl-CoA; (2) the hydroxyl group is substituted by a hydride derived from the now reduced FAD in an SN2' reaction leading to vinylacetyl-CoA; (3) isomerization to yield crotonyl-CoA. The polypeptide is 4-hydroxybutyryl-CoA dehydratase/vinylacetyl-CoA-Delta-isomerase (abfD) (Clostridium aminobutyricum).